The sequence spans 343 residues: Dihydroorotate dehydrogenase (quinone) (343 aa).

FMN-binding positions include 61 to 65 (AGLDK) and Thr-85. Lys-65 is a binding site for substrate. 110-114 (NRMGF) serves as a coordination point for substrate. Asn-138 and Asn-171 together coordinate FMN. Asn-171 is a binding site for substrate. Catalysis depends on Ser-174, which acts as the Nucleophile. Asn-176 serves as a coordination point for substrate. FMN is bound by residues Lys-216 and Thr-244. 245-246 (NT) is a substrate binding site. FMN is bound by residues Gly-267, Gly-296, and 317–318 (YS).

The protein belongs to the dihydroorotate dehydrogenase family. Type 2 subfamily. As to quaternary structure, monomer. FMN serves as cofactor.

The protein resides in the cell membrane. It catalyses the reaction (S)-dihydroorotate + a quinone = orotate + a quinol. It participates in pyrimidine metabolism; UMP biosynthesis via de novo pathway; orotate from (S)-dihydroorotate (quinone route): step 1/1. Functionally, catalyzes the conversion of dihydroorotate to orotate with quinone as electron acceptor. This Stutzerimonas stutzeri (strain A1501) (Pseudomonas stutzeri) protein is Dihydroorotate dehydrogenase (quinone).